The sequence spans 259 residues: O-antigen export system permease protein RfbA (259 aa).

Transmembrane regions (helical) follow at residues 33–53 (LGYL…YFIF), 73–95 (FPWQ…NAQI), 111–131 (VMME…FLFV), 142–162 (WGIP…SIIF), 176–196 (VSLG…SDMI), and 228–248 (EYIS…LSIF). Positions 33–251 (LGYLWSVANP…VVGLSIFNKL (219 aa)) constitute an ABC transmembrane type-2 domain.

The protein belongs to the ABC-2 integral membrane protein family.

The protein resides in the cell inner membrane. Its function is as follows. May form an ATP-driven O-antigen export apparatus, in association with RfbB. This chain is O-antigen export system permease protein RfbA (rfbA), found in Klebsiella pneumoniae.